Here is a 1194-residue protein sequence, read N- to C-terminus: DNA polymerase catalytic subunit (1194 aa).

It belongs to the DNA polymerase type-B family. In terms of assembly, forms a complex with the ssDNA-binding protein, the DNA polymerase processivity factor, and the alkaline exonuclease. Interacts with the helicase-primase complex composed of the primase, the helicase and the primase-associated factor; this interaction may coordinate leading and lagging strand DNA synthesis at the replication fork.

It is found in the host nucleus. The catalysed reaction is DNA(n) + a 2'-deoxyribonucleoside 5'-triphosphate = DNA(n+1) + diphosphate. It carries out the reaction Endonucleolytic cleavage to 5'-phosphomonoester.. Its function is as follows. Replicates viral genomic DNA. The replication complex is composed of six viral proteins: the DNA polymerase, processivity factor, primase, primase-associated factor, helicase, and ssDNA-binding protein. Additionally, the polymerase contains an intrinsic ribonuclease H (RNase H) activity that specifically degrades RNA/DNA heteroduplexes or duplex DNA substrates in the 5' to 3' direction. Therefore, it can catalyze the excision of the RNA primers that initiate the synthesis of Okazaki fragments at a replication fork during viral DNA replication. The polypeptide is DNA polymerase catalytic subunit (Varicella-zoster virus (strain Dumas) (HHV-3)).